The following is a 436-amino-acid chain: Calcium/calmodulin-regulated receptor-like kinase 2 (436 aa).

The helical transmembrane segment at 7 to 34 threads the bilayer; it reads LVVIGISVGLALGLLLALLLFFAIKWYY. A disordered region spans residues 65-88; the sequence is DRANTESSQPPENGAPTQHQPWWN. Positions 69–88 are enriched in polar residues; sequence TESSQPPENGAPTQHQPWWN. Residues 114 to 375 enclose the Protein kinase domain; sequence QNFTTVLGQG…PSIGEVTQFI (262 aa). ATP-binding positions include 120–128 and Lys-142; that span reads LGQGSFGPV. Phosphotyrosine is present on Tyr-187. Asp-239 (proton acceptor) is an active-site residue. Thr-276 carries the post-translational modification Phosphothreonine. Residue Tyr-284 is modified to Phosphotyrosine.

The protein belongs to the protein kinase superfamily. Ser/Thr protein kinase family.

Its subcellular location is the cell membrane. The enzyme catalyses L-seryl-[protein] + ATP = O-phospho-L-seryl-[protein] + ADP + H(+). The catalysed reaction is L-threonyl-[protein] + ATP = O-phospho-L-threonyl-[protein] + ADP + H(+). In Arabidopsis thaliana (Mouse-ear cress), this protein is Calcium/calmodulin-regulated receptor-like kinase 2.